We begin with the raw amino-acid sequence, 246 residues long: Acetoacetate decarboxylase (246 aa).

Lys-116 acts as the Schiff-base intermediate with acetoacetate in catalysis.

Belongs to the ADC family.

It carries out the reaction acetoacetate + H(+) = acetone + CO2. Its function is as follows. Catalyzes the conversion of acetoacetate to acetone and carbon dioxide. This Burkholderia cenocepacia (strain ATCC BAA-245 / DSM 16553 / LMG 16656 / NCTC 13227 / J2315 / CF5610) (Burkholderia cepacia (strain J2315)) protein is Acetoacetate decarboxylase.